Consider the following 81-residue polypeptide: N.vectensis toxin 4 (81 aa).

The signal sequence occupies residues 1 to 20; sequence MRSSWMFVICFAMLILYTNG. 3 disulfide bridges follow: Cys46/Cys75, Cys48/Cys70, and Cys63/Cys76.

Expressed in ectodermal gland cells. In adult female tissues, highly transcribed in mesenteries (gametes-producing tissue) and slightly transcribed in tentacles, pharynx and physa.

Functionally, has toxic effects on zebrafish larvae. It causes contractile paralysis and twitching of the tail within 30 minutes, followed by death within 40 minutes. Does not show any toxicity when injected into arthropods (cherry shrimps or grass shrimps). The chain is N.vectensis toxin 4 from Nematostella vectensis (Starlet sea anemone).